Here is a 426-residue protein sequence, read N- to C-terminus: Glutamate-1-semialdehyde 2,1-aminomutase 2 (426 aa).

The residue at position 265 (lysine 265) is an N6-(pyridoxal phosphate)lysine.

The protein belongs to the class-III pyridoxal-phosphate-dependent aminotransferase family. HemL subfamily. Homodimer. Pyridoxal 5'-phosphate serves as cofactor.

The protein resides in the cytoplasm. It catalyses the reaction (S)-4-amino-5-oxopentanoate = 5-aminolevulinate. The protein operates within porphyrin-containing compound metabolism; protoporphyrin-IX biosynthesis; 5-aminolevulinate from L-glutamyl-tRNA(Glu): step 2/2. The polypeptide is Glutamate-1-semialdehyde 2,1-aminomutase 2 (Lachnoclostridium phytofermentans (strain ATCC 700394 / DSM 18823 / ISDg) (Clostridium phytofermentans)).